A 116-amino-acid polypeptide reads, in one-letter code: MRNKLIELVEASQLRTDFPEFRVGDNVRVHVRIREGGKERIQIFEGLVISKKESGTRETFTVRKISFGIGVNRTFPLHSPLISAIEVVRSNKVRRAKLYYMKNRAGKSARLKEIKR.

This sequence belongs to the bacterial ribosomal protein bL19 family.

Functionally, this protein is located at the 30S-50S ribosomal subunit interface and may play a role in the structure and function of the aminoacyl-tRNA binding site. The chain is Large ribosomal subunit protein bL19 from Mycoplasmopsis agalactiae (strain NCTC 10123 / CIP 59.7 / PG2) (Mycoplasma agalactiae).